Reading from the N-terminus, the 64-residue chain is Beta-defensin 5 (64 aa).

The signal sequence occupies residues 1-22 (MRLHHLLLVLLFLVLSAGSGFT). At Q23 the chain carries Pyrrolidone carboxylic acid. 3 disulfide bridges follow: C31-C60, C38-C53, and C43-C61.

This sequence belongs to the beta-defensin family. In terms of tissue distribution, neutrophilic granules. Alveolar macrophages.

It localises to the secreted. Functionally, has bactericidal activity. Active against E.coli ML35 but not against S.aureus 502A. The polypeptide is Beta-defensin 5 (DEFB5) (Bos taurus (Bovine)).